The primary structure comprises 270 residues: Ribosomal RNA small subunit methyltransferase A (270 aa).

N18, L20, G45, E66, D91, and N112 together coordinate S-adenosyl-L-methionine.

It belongs to the class I-like SAM-binding methyltransferase superfamily. rRNA adenine N(6)-methyltransferase family. RsmA subfamily.

It is found in the cytoplasm. It catalyses the reaction adenosine(1518)/adenosine(1519) in 16S rRNA + 4 S-adenosyl-L-methionine = N(6)-dimethyladenosine(1518)/N(6)-dimethyladenosine(1519) in 16S rRNA + 4 S-adenosyl-L-homocysteine + 4 H(+). Functionally, specifically dimethylates two adjacent adenosines (A1518 and A1519) in the loop of a conserved hairpin near the 3'-end of 16S rRNA in the 30S particle. May play a critical role in biogenesis of 30S subunits. This Shewanella piezotolerans (strain WP3 / JCM 13877) protein is Ribosomal RNA small subunit methyltransferase A.